We begin with the raw amino-acid sequence, 259 residues long: Thiazole synthase (259 aa).

K99 serves as the catalytic Schiff-base intermediate with DXP. 1-deoxy-D-xylulose 5-phosphate contacts are provided by residues G160, 186 to 187, and 208 to 209; these read AG and NT.

This sequence belongs to the ThiG family. As to quaternary structure, homotetramer. Forms heterodimers with either ThiH or ThiS.

Its subcellular location is the cytoplasm. The catalysed reaction is [ThiS sulfur-carrier protein]-C-terminal-Gly-aminoethanethioate + 2-iminoacetate + 1-deoxy-D-xylulose 5-phosphate = [ThiS sulfur-carrier protein]-C-terminal Gly-Gly + 2-[(2R,5Z)-2-carboxy-4-methylthiazol-5(2H)-ylidene]ethyl phosphate + 2 H2O + H(+). Its pathway is cofactor biosynthesis; thiamine diphosphate biosynthesis. Catalyzes the rearrangement of 1-deoxy-D-xylulose 5-phosphate (DXP) to produce the thiazole phosphate moiety of thiamine. Sulfur is provided by the thiocarboxylate moiety of the carrier protein ThiS. In vitro, sulfur can be provided by H(2)S. The protein is Thiazole synthase of Porphyromonas gingivalis (strain ATCC 33277 / DSM 20709 / CIP 103683 / JCM 12257 / NCTC 11834 / 2561).